A 305-amino-acid chain; its full sequence is tRNA pseudouridine synthase B (305 aa).

The Nucleophile role is filled by aspartate 48.

The protein belongs to the pseudouridine synthase TruB family. Type 1 subfamily.

It catalyses the reaction uridine(55) in tRNA = pseudouridine(55) in tRNA. Its function is as follows. Responsible for synthesis of pseudouridine from uracil-55 in the psi GC loop of transfer RNAs. This chain is tRNA pseudouridine synthase B, found in Mannheimia succiniciproducens (strain KCTC 0769BP / MBEL55E).